The following is a 372-amino-acid chain: N-methyl-L-tryptophan oxidase (372 aa).

Position 4–34 (4–34 (DLIIIGSGSVGAAAGYYATRAGLNVLMTDAH)) interacts with FAD. S-8alpha-FAD cysteine is present on Cys308.

Belongs to the MSOX/MTOX family. MTOX subfamily. As to quaternary structure, monomer. Requires FAD as cofactor.

The catalysed reaction is N(alpha)-methyl-L-tryptophan + O2 + H2O = L-tryptophan + formaldehyde + H2O2. In terms of biological role, catalyzes the oxidative demethylation of N-methyl-L-tryptophan. In Escherichia coli O127:H6 (strain E2348/69 / EPEC), this protein is N-methyl-L-tryptophan oxidase.